The sequence spans 207 residues: Ribosomal RNA large subunit methyltransferase E (207 aa).

S-adenosyl-L-methionine contacts are provided by Gly-60, Trp-62, Asp-80, Asp-96, and Asp-121. The Proton acceptor role is filled by Lys-161.

The protein belongs to the class I-like SAM-binding methyltransferase superfamily. RNA methyltransferase RlmE family.

Its subcellular location is the cytoplasm. It carries out the reaction uridine(2552) in 23S rRNA + S-adenosyl-L-methionine = 2'-O-methyluridine(2552) in 23S rRNA + S-adenosyl-L-homocysteine + H(+). In terms of biological role, specifically methylates the uridine in position 2552 of 23S rRNA at the 2'-O position of the ribose in the fully assembled 50S ribosomal subunit. In Marinobacter nauticus (strain ATCC 700491 / DSM 11845 / VT8) (Marinobacter aquaeolei), this protein is Ribosomal RNA large subunit methyltransferase E.